Reading from the N-terminus, the 785-residue chain is uncharacterized protein (785 aa).

Residues Leu-293–Phe-421 form the DOD-type homing endonuclease domain.

This protein undergoes a protein self splicing that involves a post-translational excision of the intervening region (intein) followed by peptide ligation.

This is an uncharacterized protein from Methanocaldococcus jannaschii (strain ATCC 43067 / DSM 2661 / JAL-1 / JCM 10045 / NBRC 100440) (Methanococcus jannaschii).